Here is a 151-residue protein sequence, read N- to C-terminus: Group 10 secretory phospholipase A2 (151 aa).

An N-terminal signal peptide occupies residues 1 to 17 (MLLLLLLLLLGPGPGFS). The propeptide occupies 18 to 28 (EATRRSHVYKR). Cystine bridges form between cysteine 39/cysteine 97, cysteine 53/cysteine 143, cysteine 55/cysteine 71, cysteine 70/cysteine 125, cysteine 76/cysteine 150, cysteine 77/cysteine 118, cysteine 86/cysteine 111, and cysteine 104/cysteine 116. Positions 54, 56, and 58 each coordinate Ca(2+). Histidine 74 is a catalytic residue. Aspartate 75 is a Ca(2+) binding site. The active site involves aspartate 119.

The protein belongs to the phospholipase A2 family. As to quaternary structure, interacts with PLA2R1; this interaction mediates PLA2G10 clearance and inactivation. Ca(2+) is required as a cofactor. As to expression, expressed at high levels in testis and the gastrointestinal tract including stomach and colon. Expressed at lower levels in other tissues including small intestine, uterus, oviduct, lung, thymus, spleen and brain. Expressed in Paneth-like secretory epithelial cells of the colon. Expressed in gastric and ileac epithelial cells and in glandular epithelium of intestinal mucosa (at protein level). Expressed in late spermatogenic cells, spermatocytes and spermatids, but not spermatogonia in seminiferous tubules (at protein level). Expressed mainly in the apical side of endometrial epithelial cells and in the interstitium beneath the epithelium of uterus (at protein level). Expressed in resident spleen macrophages (at protein level). Expressed at outermost layer of hair follicles. Expressed in dorsal root ganglia in both NEFH-positive A-fibers and PRPH-positive C-fibers (at protein level).

The protein resides in the secreted. It localises to the lysosome. Its subcellular location is the cytoplasmic vesicle. It is found in the secretory vesicle. The protein localises to the acrosome. The catalysed reaction is a 1,2-diacyl-sn-glycero-3-phosphocholine + H2O = a 1-acyl-sn-glycero-3-phosphocholine + a fatty acid + H(+). It carries out the reaction 1-hexadecanoyl-2-(9Z-octadecenoyl)-sn-glycero-3-phosphocholine + H2O = 1-hexadecanoyl-sn-glycero-3-phosphocholine + (9Z)-octadecenoate + H(+). The enzyme catalyses 1-octadecanoyl-2-(5Z,8Z,11Z,14Z-eicosatetraenoyl)-sn-glycero-3-phosphocholine + H2O = 1-octadecanoyl-sn-glycero-3-phosphocholine + (5Z,8Z,11Z,14Z)-eicosatetraenoate + H(+). It catalyses the reaction 1,2-dihexadecanoyl-sn-glycero-3-phosphocholine + H2O = 1-hexadecanoyl-sn-glycero-3-phosphocholine + hexadecanoate + H(+). The catalysed reaction is 1-hexadecanoyl-2-(9Z-octadecenoyl)-sn-glycero-3-phosphoglycerol + H2O = 1-hexadecanoyl-sn-glycero-3-phosphoglycerol + (9Z)-octadecenoate + H(+). It carries out the reaction 1,2-dihexadecanoyl-sn-glycero-3-phospho-(1'-sn-glycerol) + H2O = 1-hexadecanoyl-sn-glycero-3-phospho-(1'-sn-glycerol) + hexadecanoate + H(+). The enzyme catalyses 1-hexadecanoyl-2-(9Z-octadecenoyl)-sn-glycero-3-phospho-L-serine + H2O = 1-hexadecanoyl-sn-glycero-3-phospho-L-serine + (9Z)-octadecenoate + H(+). It catalyses the reaction 1-hexadecanoyl-2-(9Z,12Z-octadecadienoyl)-sn-glycero-3-phosphoethanolamine + H2O = 1-hexadecanoyl-sn-glycero-3-phosphoethanolamine + (9Z,12Z)-octadecadienoate + H(+). The catalysed reaction is 1-hexadecanoyl-2-(9Z-octadecenoyl)-sn-glycero-3-phosphate + H2O = 1-hexadecanoyl-sn-glycero-3-phosphate + (9Z)-octadecenoate + H(+). It carries out the reaction 1-O-hexadecyl-2-acetyl-sn-glycero-3-phosphocholine + H2O = 1-O-hexadecyl-sn-glycero-3-phosphocholine + acetate + H(+). Functionally, secretory calcium-dependent phospholipase A2 that primarily targets extracellular phospholipids. Hydrolyzes the ester bond of the fatty acyl group attached at sn-2 position of phospholipids with preference for phosphatidylcholines and phosphatidylglycerols over phosphatidylethanolamines. Preferentially releases sn-2 omega-6 and omega-3 polyunsaturated fatty acyl (PUFA) chains over saturated fatty acyls. Contributes to phospholipid remodeling of very low-density lipoprotein (VLDL), low-density lipoprotein (LDL) and high-density lipoprotein (HDL) particles. Hydrolyzes LDL phospholipids releasing unsaturated fatty acids that regulate macrophage differentiation toward foam cells. Efficiently hydrolyzes and inactivates PAF, a potent lipid mediator present in oxidized LDL. May act in an autocrine and paracrine manner. Secreted by lung epithelium, targets membrane phospholipids of infiltrating eosinophils, releasing arachidonate and boosting eicosanoid and cysteinyl leukotriene synthesis involved in airway inflammatory response. Secreted by gut epithelium, hydrolyzes dietary and biliary phosphatidylcholines in the gastrointestinal lumen, thereby regulating adipogenesis and body weight. Plays a stem cell regulator role in colon epithelium. Within intracellular compartment, mediates Paneth-like cell differentiation and its stem cell supporting functions by inhibiting Wnt signaling pathway in intestinal stem cell (ISC). Secreted in the intestinal lumen upon inflammation, acts in an autocrine way and promotes prostaglandin E2 synthesis that stimulates the Wnt signaling pathway in ISCs and tissue regeneration. May participate in hair follicle morphogenesis by regulating phosphatidylethanolamines metabolism at the outermost epithelial layer and facilitating melanin synthesis. By generating lysophosphatidylcholines (LPCs) at sperm acrosome controls sperm cell capacitation, acrosome reaction and overall fertility. May promote neurite outgrowth in neuron fibers involved in nociception. Contributes to lipid remodeling of cellular membranes and generation of lipid mediators involved in pathogen clearance. Cleaves sn-2 fatty acyl chains of phosphatidylglycerols and phosphatidylethanolamines, which are major components of membrane phospholipids in bacteria. Displays bactericidal activity against Gram-positive bacteria by directly hydrolyzing phospholipids of the bacterial membrane. In pulmonary epithelium, may contribute to host defense response against adenoviral infection. Prevents adenovirus entry into host cells by hydrolyzing host cell plasma membrane, releasing C16:0 LPCs that inhibit virus-mediated membrane fusion and viral infection. Likely prevents adenoviral entry into the endosomes of host cells. May play a role in maturation and activation of innate immune cells including macrophages, group 2 innate lymphoid cells and mast cells. This is Group 10 secretory phospholipase A2 (Pla2g10) from Mus musculus (Mouse).